Here is an 892-residue protein sequence, read N- to C-terminus: Alpha-actinin-1 (892 aa).

M1 carries the post-translational modification N-acetylmethionine. Residues 1-247 (MDHYDSQQTN…IMTYVSSFYH (247 aa)) form an actin-binding region. S6 carries the phosphoserine modification. Y12 carries the phosphotyrosine; by FAK1 modification. Calponin-homology (CH) domains lie at 31–135 (KQQR…LRFA) and 144–250 (TSAK…HAFS). N6-acetyllysine occurs at positions 95 and 195. Spectrin repeat units lie at residues 274 to 384 (QLME…WLLN), 394 to 499 (HLAE…ALER), 509 to 620 (QLYL…ALTE), and 630 to 733 (RLRK…EVEN). The interaction with DDN stretch occupies residues 274 to 733 (QLMEDYEKLA…IARTINEVEN (460 aa)). S471 is subject to Phosphoserine. N6-acetyllysine is present on K676. The residue at position 677 (S677) is a Phosphoserine. EF-hand domains are found at residues 746-781 (EQMNEFRASFNHFDRDHSGTLGPEEFKACLISLGYD) and 787-822 (QGEAEFARIMSIVDPNRLGVVTFQAFIDFMSRETAD). The Ca(2+) site is built by D759, D761, S763, T765, and E770. S890 carries the post-translational modification Phosphoserine.

This sequence belongs to the alpha-actinin family. In terms of assembly, homodimer; antiparallel. Interacts with MYOZ2, TTID and LPP. Interacts with DDN. Interacts with PSD. Interacts with MICALL2. Interacts with DNM2 and CTTN. Interacts with PDLIM1. Interacts with PDLIM2. Interacts with PDLIM4 (via PDZ domain). Interacts with IGSF8.

The protein resides in the cytoplasm. Its subcellular location is the cytoskeleton. It localises to the myofibril. It is found in the sarcomere. The protein localises to the z line. The protein resides in the cell membrane. Its subcellular location is the cell junction. It localises to the cell projection. It is found in the ruffle. In terms of biological role, F-actin cross-linking protein which is thought to anchor actin to a variety of intracellular structures. Association with IGSF8 regulates the immune synapse formation and is required for efficient T-cell activation. The sequence is that of Alpha-actinin-1 (Actn1) from Mus musculus (Mouse).